Consider the following 225-residue polypeptide: MNSIEFPLFHRTTQNSVISTTLNDLSNWSRLSSLWPLLYGTSCCFIEFASLIGSRFDFDRYGLVPRSSPRQADLILTAGTVTMKMAPSLVRLYEQMPEPKYVIAMGACTITGGMFSTDSYSTVRGVDKLIPVDVYLPGCPPKPEAIIDAITKLRKKISREIYPDRIMSQRENRCFTTNHKFQVGHSIHTGNYDQGFLYQPPSTSEIPPETFFKYKSSVSSHELVN.

The [4Fe-4S] cluster site is built by Cys-43, Cys-44, Cys-108, and Cys-139.

The protein belongs to the complex I 20 kDa subunit family. As to quaternary structure, NDH is composed of at least 16 different subunits, 5 of which are encoded in the nucleus. [4Fe-4S] cluster is required as a cofactor.

Its subcellular location is the plastid. The protein localises to the chloroplast thylakoid membrane. It catalyses the reaction a plastoquinone + NADH + (n+1) H(+)(in) = a plastoquinol + NAD(+) + n H(+)(out). The catalysed reaction is a plastoquinone + NADPH + (n+1) H(+)(in) = a plastoquinol + NADP(+) + n H(+)(out). Functionally, NDH shuttles electrons from NAD(P)H:plastoquinone, via FMN and iron-sulfur (Fe-S) centers, to quinones in the photosynthetic chain and possibly in a chloroplast respiratory chain. The immediate electron acceptor for the enzyme in this species is believed to be plastoquinone. Couples the redox reaction to proton translocation, and thus conserves the redox energy in a proton gradient. This is NAD(P)H-quinone oxidoreductase subunit K, chloroplastic from Helianthus annuus (Common sunflower).